Consider the following 471-residue polypeptide: Chromosomal replication initiator protein DnaA (471 aa).

The segment at 1-77 is domain I, interacts with DnaA modulators; that stretch reads MELNSSFWTL…YTEISDTYGK (77 aa). Residues 77 to 130 form a domain II region; it reads KPFEVEFSITGNKINSHIETSTTPDEVLSGSEILQAQLARAQNIQPTQPRSSSD. A domain III, AAA+ region region spans residues 131-349; that stretch reads TLNSELTFST…GNLKKVKMFS (219 aa). The ATP site is built by Gly-176, Gly-178, Lys-179, and Thr-180. The interval 350–471 is domain IV, binds dsDNA; sequence ELQGLPIDHE…EQRIHNITRV (122 aa).

Belongs to the DnaA family. In terms of assembly, oligomerizes as a right-handed, spiral filament on DNA at oriC.

The protein resides in the cytoplasm. Plays an essential role in the initiation and regulation of chromosomal replication. ATP-DnaA binds to the origin of replication (oriC) to initiate formation of the DNA replication initiation complex once per cell cycle. Binds the DnaA box (a 9 base pair repeat at the origin) and separates the double-stranded (ds)DNA. Forms a right-handed helical filament on oriC DNA; dsDNA binds to the exterior of the filament while single-stranded (ss)DNA is stabiized in the filament's interior. The ATP-DnaA-oriC complex binds and stabilizes one strand of the AT-rich DNA unwinding element (DUE), permitting loading of DNA polymerase. After initiation quickly degrades to an ADP-DnaA complex that is not apt for DNA replication. Binds acidic phospholipids. This chain is Chromosomal replication initiator protein DnaA, found in Bdellovibrio bacteriovorus (strain ATCC 15356 / DSM 50701 / NCIMB 9529 / HD100).